The chain runs to 472 residues: F420-non-reducing hydrogenase subunit A (472 aa).

Residues Cys61, Cys64, Cys442, and Cys445 each coordinate Ni(2+).

This sequence belongs to the [NiFe]/[NiFeSe] hydrogenase large subunit family. The F420-non-reducing hydrogenase is composed of three subunits; MvhA, MvhD and MvhG. It forms a complex with the heterodisulfide reductase (hdr). Ni(2+) is required as a cofactor.

Functionally, part of a complex that provides reducing equivalents for heterodisulfide reductase. This is F420-non-reducing hydrogenase subunit A (mvhA) from Methanothermobacter marburgensis (strain ATCC BAA-927 / DSM 2133 / JCM 14651 / NBRC 100331 / OCM 82 / Marburg) (Methanobacterium thermoautotrophicum).